The primary structure comprises 315 residues: Lipoyl synthase (315 aa).

[4Fe-4S] cluster is bound by residues C62, C67, C73, C88, C92, C95, and S302. A Radical SAM core domain is found at 74–291 (FNHGAATFMI…KKIALKLGFS (218 aa)).

Belongs to the radical SAM superfamily. Lipoyl synthase family. It depends on [4Fe-4S] cluster as a cofactor.

The protein resides in the cytoplasm. It carries out the reaction [[Fe-S] cluster scaffold protein carrying a second [4Fe-4S](2+) cluster] + N(6)-octanoyl-L-lysyl-[protein] + 2 oxidized [2Fe-2S]-[ferredoxin] + 2 S-adenosyl-L-methionine + 4 H(+) = [[Fe-S] cluster scaffold protein] + N(6)-[(R)-dihydrolipoyl]-L-lysyl-[protein] + 4 Fe(3+) + 2 hydrogen sulfide + 2 5'-deoxyadenosine + 2 L-methionine + 2 reduced [2Fe-2S]-[ferredoxin]. Its pathway is protein modification; protein lipoylation via endogenous pathway; protein N(6)-(lipoyl)lysine from octanoyl-[acyl-carrier-protein]: step 2/2. Its function is as follows. Catalyzes the radical-mediated insertion of two sulfur atoms into the C-6 and C-8 positions of the octanoyl moiety bound to the lipoyl domains of lipoate-dependent enzymes, thereby converting the octanoylated domains into lipoylated derivatives. The protein is Lipoyl synthase of Ruthia magnifica subsp. Calyptogena magnifica.